The primary structure comprises 403 residues: Accessory Sec system protein translocase subunit SecY2 (403 aa).

Transmembrane regions (helical) follow at residues 17–37 (MLYT…SIVS), 63–83 (LNIF…LMLI), 105–125 (ILTL…YVSK), 131–151 (DNIY…VWLA), 157–177 (YGIA…MMHQ), 186–206 (HIVI…LLFI), 240–260 (ITLM…HFIL), 276–296 (FDSP…GYFL), 339–359 (WFGS…TLFV), and 366–386 (IYFS…AETI).

It belongs to the SecY/SEC61-alpha family. SecY2 subfamily. In terms of assembly, component of the accessory SecA2/SecY2 protein translocase complex required to export cell wall proteins. May form heterotrimers with SecE and SecG subunits.

It localises to the cell membrane. Functionally, part of the accessory SecA2/SecY2 system specifically required for export of possible cell wall proteins. The central subunit of a protein translocation channel. This Staphylococcus aureus (strain N315) protein is Accessory Sec system protein translocase subunit SecY2.